The chain runs to 765 residues: E3 ubiquitin-protein ligase SlrP (765 aa).

Residues 1-451 form an interaction with target proteins region; the sequence is MFNITNIQST…VDYQGPRVLF (451 aa). 10 LRR repeats span residues 200-219, 221-242, 243-262, 263-284, 285-305, 306-325, 326-346, 347-368, 369-389, and 390-410; these read QITT…ENLQ, NIKT…LPDT, IQEM…RLPS, ALQS…LPEE, LRYL…LPSG, ITHL…TLPP, GLKT…SLPP, ELQV…LPPT, ITTL…LPAA, and LQIM…LPHF. The segment at 452 to 461 is linker; the sequence is AMGDFSIVRV. The E3 ubiquitin-protein ligase catalytic domain stretch occupies residues 462–765; that stretch reads TRPLHQAVQG…VSSLMSAYWR (304 aa). One can recognise an NEL domain in the interval 464-758; the sequence is PLHQAVQGWL…NILLKKEVSS (295 aa). Catalysis depends on cysteine 546, which acts as the Glycyl thioester intermediate.

Belongs to the LRR-containing bacterial E3 ligase family. As to quaternary structure, interacts with host TXN. Ubiquitinated in the presence of host E1 ubiquitin-activating enzyme, E2 ubiquitin-conjugating enzyme and ubiquitin.

It localises to the secreted. The protein resides in the host cytoplasm. It carries out the reaction S-ubiquitinyl-[E2 ubiquitin-conjugating enzyme]-L-cysteine + [acceptor protein]-L-lysine = [E2 ubiquitin-conjugating enzyme]-L-cysteine + N(6)-ubiquitinyl-[acceptor protein]-L-lysine.. Binding to TXN is inhibited by hydrogen peroxide in vitro. Its function is as follows. Effector proteins function to alter host cell physiology and promote bacterial survival in host tissues. This protein is an E3 ubiquitin ligase that interferes with host's ubiquitination pathway. Can ubiquitinate both ubiquitin and host TXN (thioredoxin). Leads to significant decrease of thioredoxin activity and increase of host cell death. This chain is E3 ubiquitin-protein ligase SlrP (slrP), found in Salmonella typhimurium (strain LT2 / SGSC1412 / ATCC 700720).